Reading from the N-terminus, the 352-residue chain is RNA-binding protein lark (352 aa).

2 consecutive RRM domains span residues 7 to 77 (FKLF…AAKS) and 86 to 156 (TKIF…VSTS). The CCHC-type zinc finger occupies 168-185 (EQCYRCGRSGHWSKECPR). Disordered stretches follow at residues 187–228 (YGSA…LRDR) and 254–352 (YQTS…YAPY). Phosphoserine occurs at positions 198 and 201. Pro residues-rich tracts occupy residues 214–224 (PYPPPPPPPPF) and 262–277 (FPPP…PLPP). Over residues 279-288 (LSGSLRSCSV) the composition is skewed to polar residues. Phosphoserine occurs at positions 315 and 325. The span at 320–334 (GYEDFSRDAFDERMI) shows a compositional bias: basic and acidic residues.

In terms of tissue distribution, expressed in the CNS and in CCAP neurons of the ventral nervous system (VNS), which control insect ecdysis.

The protein localises to the cytoplasm. Its subcellular location is the nucleus. Its function is as follows. Essential RNA-binding protein. May be required for circadian repression of eclosion. Also essential for nurse cell dumping during oogenesis, the process whereby the cytoplasmic contents of nurse cells are transferred to the oocyte late in it's development. In Drosophila melanogaster (Fruit fly), this protein is RNA-binding protein lark (lark).